The following is a 266-amino-acid chain: 4-hydroxy-tetrahydrodipicolinate reductase (266 aa).

Residue 11-16 coordinates NAD(+); the sequence is GALGKM. K39 is an NADP(+) binding site. 100–102 is a binding site for NAD(+); that stretch reads GTT. The active-site Proton donor/acceptor is the H156. H157 is a binding site for (S)-2,3,4,5-tetrahydrodipicolinate. Catalysis depends on K160, which acts as the Proton donor. 166-167 contacts (S)-2,3,4,5-tetrahydrodipicolinate; that stretch reads GT.

The protein belongs to the DapB family.

Its subcellular location is the cytoplasm. It carries out the reaction (S)-2,3,4,5-tetrahydrodipicolinate + NAD(+) + H2O = (2S,4S)-4-hydroxy-2,3,4,5-tetrahydrodipicolinate + NADH + H(+). It catalyses the reaction (S)-2,3,4,5-tetrahydrodipicolinate + NADP(+) + H2O = (2S,4S)-4-hydroxy-2,3,4,5-tetrahydrodipicolinate + NADPH + H(+). It participates in amino-acid biosynthesis; L-lysine biosynthesis via DAP pathway; (S)-tetrahydrodipicolinate from L-aspartate: step 4/4. In terms of biological role, catalyzes the conversion of 4-hydroxy-tetrahydrodipicolinate (HTPA) to tetrahydrodipicolinate. In Syntrophomonas wolfei subsp. wolfei (strain DSM 2245B / Goettingen), this protein is 4-hydroxy-tetrahydrodipicolinate reductase.